The following is a 193-amino-acid chain: Nucleoside triphosphate pyrophosphatase (193 aa).

Asp-69 (proton acceptor) is an active-site residue.

It belongs to the Maf family. The cofactor is a divalent metal cation.

The protein resides in the cytoplasm. It catalyses the reaction a ribonucleoside 5'-triphosphate + H2O = a ribonucleoside 5'-phosphate + diphosphate + H(+). The catalysed reaction is a 2'-deoxyribonucleoside 5'-triphosphate + H2O = a 2'-deoxyribonucleoside 5'-phosphate + diphosphate + H(+). Nucleoside triphosphate pyrophosphatase. May have a dual role in cell division arrest and in preventing the incorporation of modified nucleotides into cellular nucleic acids. This Parasynechococcus marenigrum (strain WH8102) protein is Nucleoside triphosphate pyrophosphatase.